An 842-amino-acid chain; its full sequence is Probable cleavage and polyadenylation specificity factor subunit 2 (842 aa).

Over residues 414–425 (AEETRIRMERAR) the composition is skewed to basic and acidic residues. 2 disordered regions span residues 414–442 (AEET…DDIA) and 708–747 (METF…SIPI). Residues 432-441 (ESDDSDDDDI) show a composition bias toward acidic residues. Polar residues predominate over residues 731–747 (SNGQSKENDENASSIPI).

Belongs to the metallo-beta-lactamase superfamily. RNA-metabolizing metallo-beta-lactamase-like family. CPSF2/YSH1 subfamily. As to quaternary structure, CPSF is a heterotetramer composed of four distinct subunits 160, 100, 70 and 30 kDa.

Its subcellular location is the nucleus. CPSF plays a key role in pre-mRNA 3'-end formation, recognizing the AAUAAA signal sequence and interacting with poly(A)polymerase and other factors to bring about cleavage and poly(A) addition. The chain is Probable cleavage and polyadenylation specificity factor subunit 2 from Caenorhabditis briggsae.